A 279-amino-acid polypeptide reads, in one-letter code: Probable endonuclease 4 (279 aa).

Zn(2+) contacts are provided by histidine 69, histidine 109, glutamate 145, aspartate 179, histidine 182, histidine 216, aspartate 229, histidine 231, and glutamate 261.

Belongs to the AP endonuclease 2 family. Requires Zn(2+) as cofactor.

It catalyses the reaction Endonucleolytic cleavage to 5'-phosphooligonucleotide end-products.. Its function is as follows. Endonuclease IV plays a role in DNA repair. It cleaves phosphodiester bonds at apurinic or apyrimidinic (AP) sites, generating a 3'-hydroxyl group and a 5'-terminal sugar phosphate. The protein is Probable endonuclease 4 of Desulforapulum autotrophicum (strain ATCC 43914 / DSM 3382 / VKM B-1955 / HRM2) (Desulfobacterium autotrophicum).